Here is a 973-residue protein sequence, read N- to C-terminus: Putative cell agglutination protein pfl3 (973 aa).

The N-terminal stretch at 1 to 24 (MSLFPQILLRLLFLAFTLKSTSNA) is a signal peptide. Residues N75, N96, N147, N171, N184, N218, and N253 are each glycosylated (N-linked (GlcNAc...) asparagine). Repeat copies occupy residues 198–232 (GTIT…IPTA), 233–267 (GTVT…IPTA), 268–302 (GTRT…LPTA), 303–337 (GTNT…YPTA), 338–372 (GMVT…IPTA), 373–407 (GTVT…IPTA), 408–442 (GTRT…LPTA), 443–477 (GTNT…EPTA), 478–512 (GVVT…EPTA), 513–547 (GVVT…EPTA), 548–582 (GVVT…EPTA), 583–617 (GVVT…EPTA), 618–652 (GVVT…EPTA), 653–687 (GVVT…EPTA), 688–722 (GVVT…EPTA), 723–757 (GVVT…EPTA), 758–792 (GVVT…EPTA), and 793–828 (GYVT…VPSL). The interval 198–828 (GTITLTTISG…GTVLQVVPSL (631 aa)) is 18 X 35 AA approximate tandem repeats. N352 and N393 each carry an N-linked (GlcNAc...) asparagine glycan. Positions 820-973 (TVLQVVPSLF…SNVYFKAVPL (154 aa)) constitute a DIPSY domain. An N-linked (GlcNAc...) asparagine glycan is attached at N848.

Belongs to the mam3/map4 family.

Its subcellular location is the cell surface. In terms of biological role, may be involved in agglutination during conjugation or other aspects of colony formation. Induces flocculation when overexpressed. This chain is Putative cell agglutination protein pfl3, found in Schizosaccharomyces pombe (strain 972 / ATCC 24843) (Fission yeast).